We begin with the raw amino-acid sequence, 548 residues long: Chaperonin GroEL (548 aa).

ATP contacts are provided by residues T30 to P33, K51, D87 to T91, G415, and D495.

This sequence belongs to the chaperonin (HSP60) family. In terms of assembly, forms a cylinder of 14 subunits composed of two heptameric rings stacked back-to-back. Interacts with the co-chaperonin GroES.

The protein localises to the cytoplasm. The catalysed reaction is ATP + H2O + a folded polypeptide = ADP + phosphate + an unfolded polypeptide.. Together with its co-chaperonin GroES, plays an essential role in assisting protein folding. The GroEL-GroES system forms a nano-cage that allows encapsulation of the non-native substrate proteins and provides a physical environment optimized to promote and accelerate protein folding. This Yersinia pseudotuberculosis serotype O:1b (strain IP 31758) protein is Chaperonin GroEL.